Here is a 343-residue protein sequence, read N- to C-terminus: S-adenosylmethionine:tRNA ribosyltransferase-isomerase (343 aa).

This sequence belongs to the QueA family. Monomer.

It localises to the cytoplasm. The catalysed reaction is 7-aminomethyl-7-carbaguanosine(34) in tRNA + S-adenosyl-L-methionine = epoxyqueuosine(34) in tRNA + adenine + L-methionine + 2 H(+). It participates in tRNA modification; tRNA-queuosine biosynthesis. Transfers and isomerizes the ribose moiety from AdoMet to the 7-aminomethyl group of 7-deazaguanine (preQ1-tRNA) to give epoxyqueuosine (oQ-tRNA). This is S-adenosylmethionine:tRNA ribosyltransferase-isomerase from Dehalococcoides mccartyi (strain ATCC BAA-2100 / JCM 16839 / KCTC 5957 / BAV1).